Here is a 326-residue protein sequence, read N- to C-terminus: Undecaprenyl-phosphate 4-deoxy-4-formamido-L-arabinose transferase (326 aa).

The next 2 helical transmembrane spans lie at 236-256 (LSVVGSVIAVAGFLLAVLLIV) and 270-290 (VFTLFAILFMFIGAQFVAMGL).

The protein belongs to the glycosyltransferase 2 family.

It localises to the cell inner membrane. It carries out the reaction UDP-4-deoxy-4-formamido-beta-L-arabinose + di-trans,octa-cis-undecaprenyl phosphate = 4-deoxy-4-formamido-alpha-L-arabinopyranosyl di-trans,octa-cis-undecaprenyl phosphate + UDP. The protein operates within glycolipid biosynthesis; 4-amino-4-deoxy-alpha-L-arabinose undecaprenyl phosphate biosynthesis; 4-amino-4-deoxy-alpha-L-arabinose undecaprenyl phosphate from UDP-4-deoxy-4-formamido-beta-L-arabinose and undecaprenyl phosphate: step 1/2. It functions in the pathway bacterial outer membrane biogenesis; lipopolysaccharide biosynthesis. Functionally, catalyzes the transfer of 4-deoxy-4-formamido-L-arabinose from UDP to undecaprenyl phosphate. The modified arabinose is attached to lipid A and is required for resistance to polymyxin and cationic antimicrobial peptides. The polypeptide is Undecaprenyl-phosphate 4-deoxy-4-formamido-L-arabinose transferase (Proteus mirabilis (strain HI4320)).